We begin with the raw amino-acid sequence, 414 residues long: Esterase FrsA (414 aa).

The protein belongs to the FrsA family.

The catalysed reaction is a carboxylic ester + H2O = an alcohol + a carboxylate + H(+). Functionally, catalyzes the hydrolysis of esters. This Citrobacter koseri (strain ATCC BAA-895 / CDC 4225-83 / SGSC4696) protein is Esterase FrsA.